The chain runs to 1460 residues: Probable outer membrane protein PmpC (1460 aa).

A signal peptide spans 1-20; sequence MKFLSATAVFAAALPSITSA. Disordered regions lie at residues 21–48, 92–212, 279–372, 455–549, and 993–1021; these read SSVE…FTEI, SEEN…PDKD, TPPA…ESGS, TPEE…DSSI, and VDTS…TAQA. A compositionally biased stretch (low complexity) spans 34–44; it reads SSRTGSSSSQS. The segment covering 97 to 114 has biased composition (polar residues); the sequence is QASFQDSAQNQTENASEG. The segment covering 115-137 has biased composition (low complexity); it reads NSPNSENTNQSSTTETESITTDE. Polar residues predominate over residues 138-155; sequence QVQNDNESAASVPTTVET. A compositionally biased stretch (low complexity) spans 290-327; that stretch reads NDPSGSNGNDGSDDSNSSGNTDSNESNPNNSASNNTGS. The segment covering 328–358 has biased composition (polar residues); that stretch reads ENELSSSTPSAQLPNPATPFLSSVSTNSQPI. Low complexity predominate over residues 461–471; sequence LKSSQLNNQNP. Residues 487–501 are compositionally biased toward polar residues; that stretch reads SLETSPITNQDSASS. 2 stretches are compositionally biased toward low complexity: residues 504-548 and 995-1018; these read AIFR…SDSS and TSTN…STPT. In terms of domain architecture, Autotransporter spans 1167 to 1460; sequence DEVAYNNLWI…MINCGARMTF (294 aa).

It belongs to the PMP outer membrane protein family.

The protein resides in the secreted. It localises to the cell wall. The protein localises to the cell outer membrane. This Chlamydia muridarum (strain MoPn / Nigg) protein is Probable outer membrane protein PmpC (pmpC).